A 320-amino-acid polypeptide reads, in one-letter code: 4-diphosphocytidyl-2-C-methyl-D-erythritol kinase (320 aa).

Lys26 is a catalytic residue. ATP is bound at residue 111 to 121 (PVAGGMAGGSA). Asp153 is a catalytic residue.

It belongs to the GHMP kinase family. IspE subfamily.

The enzyme catalyses 4-CDP-2-C-methyl-D-erythritol + ATP = 4-CDP-2-C-methyl-D-erythritol 2-phosphate + ADP + H(+). It participates in isoprenoid biosynthesis; isopentenyl diphosphate biosynthesis via DXP pathway; isopentenyl diphosphate from 1-deoxy-D-xylulose 5-phosphate: step 3/6. In terms of biological role, catalyzes the phosphorylation of the position 2 hydroxy group of 4-diphosphocytidyl-2C-methyl-D-erythritol. The sequence is that of 4-diphosphocytidyl-2-C-methyl-D-erythritol kinase from Mycobacterium marinum (strain ATCC BAA-535 / M).